We begin with the raw amino-acid sequence, 473 residues long: Protein AUXIN RESPONSE 4 (473 aa).

Acidic residues predominate over residues 1–10 (MAIITEEEED). A disordered region spans residues 1 to 38 (MAIITEEEEDPKTLNPPKNKPKDSDFTKSESTMKNPKP). A compositionally biased stretch (polar residues) spans 29 to 38 (SESTMKNPKP). A helical membrane pass occupies residues 44–64 (FPFWFYFTVVVSLATIIFISL). The AB hydrolase-1 domain occupies 119–283 (TVVIVHGLGL…DSSISPALPL (165 aa)).

In terms of tissue distribution, most abundant in root tissue, lesser amounts in rosette leaves, stems and flowers and very little in mature siliques.

It is found in the endoplasmic reticulum membrane. In terms of biological role, required for the auxin influx facilitator AUX1 polar trafficking and its asymmetric localization within the plasma membrane. Not involved in the PIN proteins localization. The chain is Protein AUXIN RESPONSE 4 (AXR4) from Arabidopsis thaliana (Mouse-ear cress).